Reading from the N-terminus, the 200-residue chain is NAD(P)H dehydrogenase (quinone) (200 aa).

Residues 4-191 (VLVLYYSSYG…DIARYQGKHV (188 aa)) form the Flavodoxin-like domain. Residues 10-15 (SSYGHV) and 79-81 (TRF) contribute to the FMN site. Tyrosine 12 contacts NAD(+). Tryptophan 99 contributes to the substrate binding site. FMN contacts are provided by residues 114–120 (STGTQHG) and histidine 135.

The protein belongs to the WrbA family. Requires FMN as cofactor.

The enzyme catalyses a quinone + NADH + H(+) = a quinol + NAD(+). It carries out the reaction a quinone + NADPH + H(+) = a quinol + NADP(+). This chain is NAD(P)H dehydrogenase (quinone), found in Burkholderia cenocepacia (strain HI2424).